Reading from the N-terminus, the 217-residue chain is Ribonuclease HII (217 aa).

The region spanning 27-216 (SQVAGVDEAG…VKESIQEGVC (190 aa)) is the RNase H type-2 domain. Positions 33, 34, and 126 each coordinate a divalent metal cation.

It belongs to the RNase HII family. Mn(2+) is required as a cofactor. The cofactor is Mg(2+).

The protein resides in the cytoplasm. The catalysed reaction is Endonucleolytic cleavage to 5'-phosphomonoester.. Functionally, endonuclease that specifically degrades the RNA of RNA-DNA hybrids. The polypeptide is Ribonuclease HII (Chlamydia trachomatis serovar L2 (strain ATCC VR-902B / DSM 19102 / 434/Bu)).